Consider the following 507-residue polypeptide: uncharacterized protein (507 aa).

Low complexity predominate over residues 1–12 (MEKSISSISKAS). A disordered region spans residues 1–20 (MEKSISSISKASMNSDEKLD). A run of 12 helical transmembrane segments spans residues 57 to 74 (FDFR…FNAL), 100 to 120 (IMIS…SYLY), 126 to 146 (ARIL…QAAV), 157 to 177 (WFLG…LTTF), 189 to 209 (IFYA…YGVF), 221 to 241 (YLFL…FLVL), 283 to 303 (VFKH…GVPL), 326 to 346 (LMTV…AFIS), 353 to 373 (GIVL…YGSI), 379 to 399 (IGVS…SSVL), 416 to 436 (VFTS…ANIF), and 445 to 465 (VPAL…VASI).

Belongs to the major facilitator superfamily. Allantoate permease family.

Its subcellular location is the endoplasmic reticulum. It localises to the membrane. This is an uncharacterized protein from Schizosaccharomyces pombe (strain 972 / ATCC 24843) (Fission yeast).